The sequence spans 301 residues: Mitochondrial carnitine/acylcarnitine carrier protein (301 aa).

Residue Ala2 is modified to N-acetylalanine. Over Ala2 to Lys12 the chain is Cytoplasmic. 3 Solcar repeats span residues Ile8–Leu99, Leu108–Leu196, and Leu207–Ile293. The chain crosses the membrane as a helical span at residues Asn13–Leu31. Residues Asp32–Arg73 lie on the Mitochondrial matrix side of the membrane. The helical transmembrane segment at Gly74 to Phe93 threads the bilayer. At Gly94–Gln112 the chain is on the cytoplasmic side. Residues Leu113–Gly131 form a helical membrane-spanning segment. Topologically, residues Glu132–Lys170 are mitochondrial matrix. N6-acetyllysine is present on residues Lys148 and Lys157. N6-acetyllysine; alternate is present on Lys170. Lys170 bears the N6-succinyllysine; alternate mark. Residues Gly171–Tyr190 form a helical membrane-spanning segment. At Glu191 to Arg211 the chain is on the cytoplasmic side. The helical transmembrane segment at Val212 to Pro230 threads the bilayer. Over Asp231–Lys267 the chain is Mitochondrial matrix. Residues Gly268–Phe287 traverse the membrane as a helical segment. At Glu288–Leu301 the chain is on the cytoplasmic side.

This sequence belongs to the mitochondrial carrier (TC 2.A.29) family. The N-terminus is blocked.

The protein resides in the mitochondrion inner membrane. It catalyses the reaction O-acetyl-(R)-carnitine(in) + (R)-carnitine(out) = O-acetyl-(R)-carnitine(out) + (R)-carnitine(in). The enzyme catalyses an O-acyl-(R)-carnitine(in) + (R)-carnitine(out) = an O-acyl-(R)-carnitine(out) + (R)-carnitine(in). The catalysed reaction is O-propanoyl-(R)-carnitine(in) + (R)-carnitine(out) = O-propanoyl-(R)-carnitine(out) + (R)-carnitine(in). It carries out the reaction O-hexadecanoyl-(R)-carnitine(in) + (R)-carnitine(out) = O-hexadecanoyl-(R)-carnitine(out) + (R)-carnitine(in). It catalyses the reaction O-octanoyl-(R)-carnitine(in) + (R)-carnitine(out) = O-octanoyl-(R)-carnitine(out) + (R)-carnitine(in). The enzyme catalyses (R)-carnitine(in) = (R)-carnitine(out). Functionally, mediates the electroneutral exchange of acylcarnitines (O-acyl-(R)-carnitine or L-acylcarnitine) of different acyl chain lengths (ranging from O-acetyl-(R)-carnitine to long-chain O-acyl-(R)-carnitines) with free carnitine ((R)-carnitine or L-carnitine) across the mitochondrial inner membrane, via a ping-pong mechanism. Key player in the mitochondrial oxidation pathway, it translocates the fatty acids in the form of acylcarnitines into the mitochondrial matrix, where the carnitine palmitoyltransferase 2 (CPT-2) activates them to undergo fatty acid beta-oxidation. Catalyzes the unidirectional transport (uniport) of carnitine at lower rates than the antiport (exchange). In Rattus norvegicus (Rat), this protein is Mitochondrial carnitine/acylcarnitine carrier protein.